The primary structure comprises 325 residues: NADH-quinone oxidoreductase subunit H (325 aa).

8 consecutive transmembrane segments (helical) span residues 11-31 (ILLTILKAVVILLVVVTCGAF), 81-101 (VIFTLAPMIAFTSLLLAFAIV), 114-134 (IGILFFLMMAGLAVYAVLFAG), 154-174 (LSYEVFLGLSLMGVVAQAGSF), 186-206 (VWNVIPQFFGFITFAIAGVAV), 237-257 (FFVGEYIGIVTISALMVTLFF), 265-285 (LPPFIWFALKTAFFMMMFILI), and 304-324 (ICLPLTLINLLVTAAVILWQA).

It belongs to the complex I subunit 1 family. NDH-1 is composed of 13 different subunits. Subunits NuoA, H, J, K, L, M, N constitute the membrane sector of the complex.

Its subcellular location is the cell inner membrane. It catalyses the reaction a quinone + NADH + 5 H(+)(in) = a quinol + NAD(+) + 4 H(+)(out). In terms of biological role, NDH-1 shuttles electrons from NADH, via FMN and iron-sulfur (Fe-S) centers, to quinones in the respiratory chain. The immediate electron acceptor for the enzyme in this species is believed to be ubiquinone. Couples the redox reaction to proton translocation (for every two electrons transferred, four hydrogen ions are translocated across the cytoplasmic membrane), and thus conserves the redox energy in a proton gradient. This subunit may bind ubiquinone. The sequence is that of NADH-quinone oxidoreductase subunit H from Escherichia fergusonii (strain ATCC 35469 / DSM 13698 / CCUG 18766 / IAM 14443 / JCM 21226 / LMG 7866 / NBRC 102419 / NCTC 12128 / CDC 0568-73).